We begin with the raw amino-acid sequence, 60 residues long: Homeobox protein engrailed-like A (60 aa).

A DNA-binding region (homeobox) is located at residues 1 to 41 (ADQLARLRAEFQANRYLTEERRQNLARELSLNEAQIKIWFQ).

It belongs to the engrailed homeobox family.

Its subcellular location is the nucleus. The sequence is that of Homeobox protein engrailed-like A from Myxine glutinosa (Atlantic hagfish).